Consider the following 415-residue polypeptide: Proline-serine-threonine phosphatase-interacting protein 1 (415 aa).

Residues 5–264 (LQFRDAFWCR…TLEGCDVEGD (260 aa)) enclose the F-BAR domain. 2 coiled-coil regions span residues 94 to 133 (LALALREELRSLEEFRERQKEQRKKYEAIMDRVQKSKLSL) and 162 to 215 (SANG…TCEA). At serine 318 the chain carries Phosphoserine. Tyrosine 344 is subject to Phosphotyrosine; by ABL1. Positions 358–415 (SSAQDYRALYDYTAQNSDELDISAGDILAVILEGEDGWWTVERNGQRGFVPGSYLEKL) constitute an SH3 domain.

As to quaternary structure, homodimer. Homotrimer. Interacts (via coiled-coil domain) with CD2AP, PTPN12 and PTPN18. Interacts (via SH3 domain) with ABL1 and WAS. Interacts (via SH3 and coiled-coil domains) with MEFV (via B-box zinc finger); the interaction allows binding of MEFV to PYCARD and facilitates formation of PYCARD pyroptosomes. Interacts with DNM2 and FASLG. Interacts with CD2. Post-translationally, dephosphorylated on Tyr-344 by PTPN18, this event negatively regulates the association of PSTPIP1 with SH2 domain-containing proteins as tyrosine kinase. Phosphorylation of Tyr-344 is probably required for subsequent phosphorylation at other tyrosine residues. Phosphorylation is induced by activation of the EGFR and PDGFR in a ABL1 dependent manner. The phosphorylation regulates the interaction with WAS and with MEFV. As to expression, highly expressed in adult lung and spleen, and weakly expressed in testis, muscle, kidney, brain and heart. Highly expressed in spleen and thymus, moderately in lung, brain and muscle, and weakly expressed in heart and liver (at protein level).

The protein localises to the cytoplasm. The protein resides in the perinuclear region. Its subcellular location is the cell projection. It is found in the lamellipodium. It localises to the cleavage furrow. The protein localises to the cytoskeleton. The protein resides in the cell membrane. Its subcellular location is the uropodium. Its function is as follows. Involved in regulation of the actin cytoskeleton. May regulate WAS actin-bundling activity. Bridges the interaction between ABL1 and PTPN18 leading to ABL1 dephosphorylation. May play a role as a scaffold protein between PTPN12 and WAS and allow PTPN12 to dephosphorylate WAS. Has the potential to physically couple CD2 and CD2AP to WAS. Acts downstream of CD2 and CD2AP to recruit WAS to the T-cell:APC contact site so as to promote the actin polymerization required for synapse induction during T-cell activation. Down-regulates CD2-stimulated adhesion through the coupling of PTPN12 to CD2. Also has a role in innate immunity and the inflammatory response. Recruited to inflammasomes by MEFV. Induces formation of pyroptosomes, large supramolecular structures composed of oligomerized PYCARD dimers which form prior to inflammatory apoptosis. Binding to MEFV allows MEFV to bind to PYCARD and facilitates pyroptosome formation. Regulates endocytosis and cell migration in neutrophils. This is Proline-serine-threonine phosphatase-interacting protein 1 (Pstpip1) from Mus musculus (Mouse).